The following is a 217-amino-acid chain: Coiled-coil domain-containing protein 124-A (217 aa).

The segment at 1–128 (MPKKFQGENT…HLEMPLEENV (128 aa)) is disordered. Basic and acidic residues-rich tracts occupy residues 18-45 (RKAEAKAVSDGKRQKEIEDAYWQDDDKH), 52-74 (RKEDKEKKRLEQLERKKESQRLL), and 95-128 (TRAEIEETLCKEEEHKATTEKPKTHLEMPLEENV). Residues 46-82 (VARKGQRKEDKEKKRLEQLERKKESQRLLDEEDSKMK) adopt a coiled-coil conformation.

This sequence belongs to the CCDC124 family. As to quaternary structure, associates with translationally inactive ribosomes in the nonrotated state.

The protein resides in the cytoplasm. The protein localises to the cytoskeleton. It is found in the microtubule organizing center. Its subcellular location is the centrosome. It localises to the midbody. Ribosome-binding protein involved in ribosome hibernation: associates with translationally inactive ribosomes and stabilizes the nonrotated conformation of the 80S ribosome, thereby promoting ribosome preservation and storage. The chain is Coiled-coil domain-containing protein 124-A (ccdc124-a) from Xenopus laevis (African clawed frog).